The primary structure comprises 712 residues: DNA ligase (712 aa).

Low complexity predominate over residues 1-22; sequence MSTQYDSDSSPAASNSGSADPA. Residues 1–23 are disordered; that stretch reads MSTQYDSDSSPAASNSGSADPAL. Residue 53–57 participates in NAD(+) binding; it reads DAEFD. The interval 69-93 is disordered; it reads SHPEAVTGPSPTTEVAPSPPESSPF. Residues 104 to 105 and glutamate 129 contribute to the NAD(+) site; that span reads SL. The N6-AMP-lysine intermediate role is filled by lysine 131. Residues arginine 152, glutamate 192, lysine 308, and lysine 332 each coordinate NAD(+). Zn(2+) contacts are provided by cysteine 426, cysteine 429, cysteine 445, and cysteine 451. The BRCT domain maps to 624 to 712; sequence IQADLLAGLS…GPGKGDAEED (89 aa).

The protein belongs to the NAD-dependent DNA ligase family. LigA subfamily. It depends on Mg(2+) as a cofactor. Mn(2+) serves as cofactor.

It catalyses the reaction NAD(+) + (deoxyribonucleotide)n-3'-hydroxyl + 5'-phospho-(deoxyribonucleotide)m = (deoxyribonucleotide)n+m + AMP + beta-nicotinamide D-nucleotide.. Functionally, DNA ligase that catalyzes the formation of phosphodiester linkages between 5'-phosphoryl and 3'-hydroxyl groups in double-stranded DNA using NAD as a coenzyme and as the energy source for the reaction. It is essential for DNA replication and repair of damaged DNA. This Corynebacterium urealyticum (strain ATCC 43042 / DSM 7109) protein is DNA ligase.